Consider the following 224-residue polypeptide: ATP-dependent dethiobiotin synthetase BioD (224 aa).

Residue 12 to 17 (EVGKTV) participates in ATP binding. Thr16 provides a ligand contact to Mg(2+). Lys34 is an active-site residue. Position 38 (Thr38) interacts with substrate. Residues Asp47, 106-109 (EGAG), 166-167 (GS), and 196-198 (PEG) contribute to the ATP site. Mg(2+) contacts are provided by Asp47 and Glu106.

This sequence belongs to the dethiobiotin synthetase family. Homodimer. The cofactor is Mg(2+).

It is found in the cytoplasm. The enzyme catalyses (7R,8S)-7,8-diammoniononanoate + CO2 + ATP = (4R,5S)-dethiobiotin + ADP + phosphate + 3 H(+). It participates in cofactor biosynthesis; biotin biosynthesis; biotin from 7,8-diaminononanoate: step 1/2. Its function is as follows. Catalyzes a mechanistically unusual reaction, the ATP-dependent insertion of CO2 between the N7 and N8 nitrogen atoms of 7,8-diaminopelargonic acid (DAPA, also called 7,8-diammoniononanoate) to form a ureido ring. The chain is ATP-dependent dethiobiotin synthetase BioD from Saccharopolyspora erythraea (strain ATCC 11635 / DSM 40517 / JCM 4748 / NBRC 13426 / NCIMB 8594 / NRRL 2338).